Consider the following 83-residue polypeptide: ATP synthase subunit c (83 aa).

2 helical membrane-spanning segments follow: residues 9–29 (LICV…GIGI) and 51–71 (MVFM…GLVI).

It belongs to the ATPase C chain family. In terms of assembly, F-type ATPases have 2 components, F(1) - the catalytic core - and F(0) - the membrane proton channel. F(1) has five subunits: alpha(3), beta(3), gamma(1), delta(1), epsilon(1). F(0) has three main subunits: a(1), b(2) and c(10-14). The alpha and beta chains form an alternating ring which encloses part of the gamma chain. F(1) is attached to F(0) by a central stalk formed by the gamma and epsilon chains, while a peripheral stalk is formed by the delta and b chains.

Its subcellular location is the cell inner membrane. Functionally, f(1)F(0) ATP synthase produces ATP from ADP in the presence of a proton or sodium gradient. F-type ATPases consist of two structural domains, F(1) containing the extramembraneous catalytic core and F(0) containing the membrane proton channel, linked together by a central stalk and a peripheral stalk. During catalysis, ATP synthesis in the catalytic domain of F(1) is coupled via a rotary mechanism of the central stalk subunits to proton translocation. Its function is as follows. Key component of the F(0) channel; it plays a direct role in translocation across the membrane. A homomeric c-ring of between 10-14 subunits forms the central stalk rotor element with the F(1) delta and epsilon subunits. The polypeptide is ATP synthase subunit c (Desulfotalea psychrophila (strain LSv54 / DSM 12343)).